A 93-amino-acid polypeptide reads, in one-letter code: Large ribosomal subunit protein uL23c (93 aa).

This sequence belongs to the universal ribosomal protein uL23 family. As to quaternary structure, part of the 50S ribosomal subunit.

The protein localises to the plastid. Its subcellular location is the chloroplast. In terms of biological role, binds to 23S rRNA. The protein is Large ribosomal subunit protein uL23c (rpl23) of Adiantum capillus-veneris (Maidenhair fern).